Consider the following 631-residue polypeptide: 1-deoxy-D-xylulose-5-phosphate synthase (631 aa).

Residues His78 and 119–121 (AHS) contribute to the thiamine diphosphate site. Position 150 (Asp150) interacts with Mg(2+). Residues 151-152 (GA), Asn179, Tyr286, and Glu368 contribute to the thiamine diphosphate site. Asn179 contributes to the Mg(2+) binding site.

Belongs to the transketolase family. DXPS subfamily. As to quaternary structure, homodimer. It depends on Mg(2+) as a cofactor. Thiamine diphosphate is required as a cofactor.

The catalysed reaction is D-glyceraldehyde 3-phosphate + pyruvate + H(+) = 1-deoxy-D-xylulose 5-phosphate + CO2. Its pathway is metabolic intermediate biosynthesis; 1-deoxy-D-xylulose 5-phosphate biosynthesis; 1-deoxy-D-xylulose 5-phosphate from D-glyceraldehyde 3-phosphate and pyruvate: step 1/1. Catalyzes the acyloin condensation reaction between C atoms 2 and 3 of pyruvate and glyceraldehyde 3-phosphate to yield 1-deoxy-D-xylulose-5-phosphate (DXP). The sequence is that of 1-deoxy-D-xylulose-5-phosphate synthase from Verminephrobacter eiseniae (strain EF01-2).